We begin with the raw amino-acid sequence, 87 residues long: uncharacterized protein (87 aa).

This is an uncharacterized protein from Escherichia coli (Bacteriophage T4).